The following is a 463-amino-acid chain: Probable glycosyltransferase 3 (463 aa).

Positions 1–20 are disordered; the sequence is MAVTGGGRPAARQQAARGKQ. The Cytoplasmic segment spans residues 1–24; it reads MAVTGGGRPAARQQAARGKQMQRT. Low complexity predominate over residues 9 to 20; that stretch reads PAARQQAARGKQ. Residues 25–47 traverse the membrane as a helical; Signal-anchor for type II membrane protein segment; it reads FNNVKITLICGFITLLVLRGTVG. The Lumenal segment spans residues 48–463; the sequence is INLLTYGVGG…ALKMDAKIES (416 aa). Residues 82–125 are disordered; that stretch reads EIRSDTDDDDDDEEEEPLGVDASTTTTTNSTTTTATAARRRSSN. The span at 87–99 shows a compositional bias: acidic residues; sequence TDDDDDDEEEEPL. Residues 103 to 118 are compositionally biased toward low complexity; it reads ASTTTTTNSTTTTATA. N-linked (GlcNAc...) asparagine glycans are attached at residues Asn110, Asn125, and Asn442.

Belongs to the glycosyltransferase 34 family.

The protein resides in the golgi apparatus membrane. Its function is as follows. Probable glycosyltransferase that may be involved in the biosynthesis of xyloglucan. The sequence is that of Probable glycosyltransferase 3 from Oryza sativa subsp. indica (Rice).